Here is a 270-residue protein sequence, read N- to C-terminus: uncharacterized protein (270 aa).

The first 22 residues, 1–22 (MEYIKKLLCTMSVLLLIIFIGG), serve as a signal peptide directing secretion. The N-palmitoyl cysteine moiety is linked to residue cysteine 23. A lipid anchor (S-diacylglycerol cysteine) is attached at cysteine 23.

Belongs to the staphylococcal tandem lipoprotein family.

The protein resides in the cell membrane. This is an uncharacterized protein from Staphylococcus aureus (strain bovine RF122 / ET3-1).